Consider the following 181-residue polypeptide: Acireductone dioxygenase (181 aa).

Positions 97, 99, 103, and 141 each coordinate Fe(2+). The Ni(2+) site is built by His97, His99, Glu103, and His141.

This sequence belongs to the acireductone dioxygenase (ARD) family. As to quaternary structure, monomer. It depends on Fe(2+) as a cofactor. Ni(2+) is required as a cofactor.

The enzyme catalyses 1,2-dihydroxy-5-(methylsulfanyl)pent-1-en-3-one + O2 = 3-(methylsulfanyl)propanoate + CO + formate + 2 H(+). The catalysed reaction is 1,2-dihydroxy-5-(methylsulfanyl)pent-1-en-3-one + O2 = 4-methylsulfanyl-2-oxobutanoate + formate + 2 H(+). Its pathway is amino-acid biosynthesis; L-methionine biosynthesis via salvage pathway; L-methionine from S-methyl-5-thio-alpha-D-ribose 1-phosphate: step 5/6. Its function is as follows. Catalyzes 2 different reactions between oxygen and the acireductone 1,2-dihydroxy-3-keto-5-methylthiopentene (DHK-MTPene) depending upon the metal bound in the active site. Fe-containing acireductone dioxygenase (Fe-ARD) produces formate and 2-keto-4-methylthiobutyrate (KMTB), the alpha-ketoacid precursor of methionine in the methionine recycle pathway. Ni-containing acireductone dioxygenase (Ni-ARD) produces methylthiopropionate, carbon monoxide and formate, and does not lie on the methionine recycle pathway. This Pseudomonas fluorescens (strain Pf0-1) protein is Acireductone dioxygenase.